Reading from the N-terminus, the 248-residue chain is Ribonuclease HII (248 aa).

One can recognise an RNase H type-2 domain in the interval 29–219 (DIVCGVDEAG…VREAHLRLGT (191 aa)). Residues aspartate 35, glutamate 36, and aspartate 128 each contribute to the a divalent metal cation site.

It belongs to the RNase HII family. Mn(2+) is required as a cofactor. Requires Mg(2+) as cofactor.

Its subcellular location is the cytoplasm. It catalyses the reaction Endonucleolytic cleavage to 5'-phosphomonoester.. Functionally, endonuclease that specifically degrades the RNA of RNA-DNA hybrids. The polypeptide is Ribonuclease HII (Paraburkholderia xenovorans (strain LB400)).